The chain runs to 121 residues: Large ribosomal subunit protein bL12 (121 aa).

Belongs to the bacterial ribosomal protein bL12 family. Homodimer. Part of the ribosomal stalk of the 50S ribosomal subunit. Forms a multimeric L10(L12)X complex, where L10 forms an elongated spine to which 2 to 4 L12 dimers bind in a sequential fashion. Binds GTP-bound translation factors.

Functionally, forms part of the ribosomal stalk which helps the ribosome interact with GTP-bound translation factors. Is thus essential for accurate translation. This Shewanella baltica (strain OS223) protein is Large ribosomal subunit protein bL12.